Consider the following 497-residue polypeptide: Acetyl-coenzyme A carboxylase carboxyl transferase subunit beta, chloroplastic (497 aa).

The interval 30–50 (GPVENTTVNEDPTRNDTDKNI) is disordered. Basic and acidic residues predominate over residues 40-50 (DPTRNDTDKNI). Positions 230 to 497 (VQCECENCYG…FFPLNQNSIK (268 aa)) constitute a CoA carboxyltransferase N-terminal domain. Cys-232, Cys-237, Cys-253, and Cys-256 together coordinate Zn(2+). The C4-type zinc-finger motif lies at 232-256 (CECENCYGVNYKKSLNSKMNICEQC).

It belongs to the AccD/PCCB family. Acetyl-CoA carboxylase is a heterohexamer composed of biotin carboxyl carrier protein, biotin carboxylase and 2 subunits each of ACCase subunit alpha and ACCase plastid-coded subunit beta (accD). It depends on Zn(2+) as a cofactor.

It is found in the plastid. The protein localises to the chloroplast stroma. The catalysed reaction is N(6)-carboxybiotinyl-L-lysyl-[protein] + acetyl-CoA = N(6)-biotinyl-L-lysyl-[protein] + malonyl-CoA. It functions in the pathway lipid metabolism; malonyl-CoA biosynthesis; malonyl-CoA from acetyl-CoA: step 1/1. Its function is as follows. Component of the acetyl coenzyme A carboxylase (ACC) complex. Biotin carboxylase (BC) catalyzes the carboxylation of biotin on its carrier protein (BCCP) and then the CO(2) group is transferred by the transcarboxylase to acetyl-CoA to form malonyl-CoA. This Gossypium hirsutum (Upland cotton) protein is Acetyl-coenzyme A carboxylase carboxyl transferase subunit beta, chloroplastic.